A 326-amino-acid polypeptide reads, in one-letter code: Cytosolic sulfotransferase 12 (326 aa).

75–80 serves as a coordination point for 3'-phosphoadenylyl sulfate; the sequence is KSGTTW. His-140 functions as the Proton acceptor in the catalytic mechanism. Residues Arg-162, Ser-170, Tyr-228, and 290 to 292 contribute to the 3'-phosphoadenylyl sulfate site; that span reads RKG.

Belongs to the sulfotransferase 1 family. In terms of assembly, dimer. In terms of tissue distribution, expressed in the aerial parts of seedlings, in roots, leaves and flowers. Not detected in stems and siliques.

It is found in the cytoplasm. Functionally, sulfotransferase that utilizes 3'-phospho-5'-adenylyl sulfate (PAPS) as sulfonate donor to catalyze the stereospecific sulfate conjugation of 24-epibrassinosteroids. Preferred substrates are 24-epicathasterone and 6-deoxo-24-epicathasterone. Low activity with 22-deoxy-24-epiteasterone. No activity with 24-epimers catasterone and brassinolide. Sulfonates salicylic acid. May be involved in detoxification. Enhances plant response to pathogen infection and contributes to long distance signaling in systemic acquired resistance (SAR). This is Cytosolic sulfotransferase 12 (SOT12) from Arabidopsis thaliana (Mouse-ear cress).